Reading from the N-terminus, the 464-residue chain is Heterogeneous nuclear ribonucleoprotein K (464 aa).

The residue at position 1 (M1) is an N-acetylmethionine. The segment at 1–37 (METEQPEETFPNTETNGEFGKRPAEDMEEEQAFKRSR) is disordered. Residues 1 to 276 (METEQPEETF…GRGGRPMPPS (276 aa)) are necessary for interaction with DDX1. Residues 19-37 (FGKRPAEDMEEEQAFKRSR) show a composition bias toward basic and acidic residues. Position 34 is an N6-acetyllysine; alternate (K34). A Glycyl lysine isopeptide (Lys-Gly) (interchain with G-Cter in SUMO1); alternate cross-link involves residue K34. K34 is covalently cross-linked (Glycyl lysine isopeptide (Lys-Gly) (interchain with G-Cter in SUMO2); alternate). Phosphoserine is present on S36. The residue at position 39 (T39) is a Phosphothreonine. The 63-residue stretch at 42-104 (MVELRILLQS…ETIGEILKKI (63 aa)) folds into the KH 1 domain. Residues K52 and K60 each participate in a glycyl lysine isopeptide (Lys-Gly) (interchain with G-Cter in SUMO2) cross-link. 2 consecutive repeat copies span residues 54 to 76 (AGAV…NASV) and 59 to 62 (GKGG). The tract at residues 54 to 421 (AGAVIGKGGK…QIRHESGASI (368 aa)) is 2 X 22 AA approximate repeats. The interval 59 to 407 (GKGGKNIKAL…LAGSIIGKGG (349 aa)) is 5 X 4 AA repeats of G-X-G-G. Phosphoserine occurs at positions 75 and 116. One can recognise a KH 2 domain in the interval 144–209 (DCELRLLIHQ…DRVVECIKII (66 aa)). K163 participates in a covalent cross-link: Glycyl lysine isopeptide (Lys-Gly) (interchain with G-Cter in SUMO1); alternate. K163 participates in a covalent cross-link: Glycyl lysine isopeptide (Lys-Gly) (interchain with G-Cter in SUMO2); alternate. The residue at position 198 (K198) is an N6-acetyllysine. Residues S214 and S216 each carry the phosphoserine modification. K219 is covalently cross-linked (Glycyl lysine isopeptide (Lys-Gly) (interchain with G-Cter in SUMO2); alternate). K219 is modified (N6-succinyllysine; alternate). Residues 236 to 273 (YGGFTMMFDDRRGRPVGFPMRGRGGFDRMPPGRGGRPM) are RNA-binding RGG-box. Repeat copies occupy residues 245 to 250 (DRRGRP), 257 to 260 (GRGG), and 267 to 270 (GRGG). Positions 245 to 329 (DRRGRPVGFP…LMAYDRRGRP (85 aa)) are 2 X 6 AA approximate repeats. The interval 250–329 (PVGFPMRGRG…LMAYDRRGRP (80 aa)) is disordered. Residues 252–266 (GFPMRGRGGFDRMPP) show a composition bias toward low complexity. Residues 276-285 (SRRDYDDMSP) show a composition bias toward basic and acidic residues. Residue S284 is modified to Phosphoserine. The 3-4 repeat unit spans residues 295–298 (GRGG). Position 316 is an omega-N-methylarginine (R316). The 2-2 repeat unit spans residues 324–329 (DRRGRP). An Omega-N-methylarginine modification is found at R377. A Phosphoserine modification is found at S379. A Phosphotyrosine modification is found at Y380. The 65-residue stretch at 387-451 (IITTQVTIPK…DQIQNAQYLL (65 aa)) folds into the KH 3 domain. 2 tandem repeats follow at residues 399-421 (AGSI…GASI) and 404-407 (GKGG). An N6-acetyllysine; alternate modification is found at K405. K405 is covalently cross-linked (Glycyl lysine isopeptide (Lys-Gly) (interchain with G-Cter in SUMO2); alternate). S420 carries the phosphoserine modification. Residue K422 forms a Glycyl lysine isopeptide (Lys-Gly) (interchain with G-Cter in SUMO1); alternate linkage. K422 participates in a covalent cross-link: Glycyl lysine isopeptide (Lys-Gly) (interchain with G-Cter in SUMO2); alternate. Residue K422 forms a Glycyl lysine isopeptide (Lys-Gly) (interchain with G-Cter in SUMO); alternate linkage.

In terms of assembly, identified in the spliceosome C complex. Interacts with ANKRD28, RBM42 and ZIK1. Interacts with DDX1. Interacts with MDM2; this interaction leads to ubiquitination and proteasomal degradation. Interacts with p53/TP53. Interacts with BRDT. Interacts with IVNS1ABP. Interacts with PPIA/CYPA. Part of a transcription inhibitory ribonucleoprotein complex composed at least of the circular RNA circZNF827, ZNF827 and HNRNPL. Sumoylated by CBX4. Sumoylation is increased upon DNA damage, such as that produced by doxorubicin, etoposide, UV light and camptothecin, due to enhanced CBX4 phosphorylation by HIPK2 under these conditions. In terms of processing, ubiquitinated by MDM2. Doxorubicin treatment does not affect monoubiquitination, but slightly decreases HNRNPK poly-ubiquitination. Post-translationally, O-glycosylated (O-GlcNAcylated), in a cell cycle-dependent manner.

Its subcellular location is the cytoplasm. It is found in the nucleus. It localises to the nucleoplasm. The protein resides in the cell projection. The protein localises to the podosome. One of the major pre-mRNA-binding proteins. Binds tenaciously to poly(C) sequences. Likely to play a role in the nuclear metabolism of hnRNAs, particularly for pre-mRNAs that contain cytidine-rich sequences. Can also bind poly(C) single-stranded DNA. Plays an important role in p53/TP53 response to DNA damage, acting at the level of both transcription activation and repression. When sumoylated, acts as a transcriptional coactivator of p53/TP53, playing a role in p21/CDKN1A and 14-3-3 sigma/SFN induction. As far as transcription repression is concerned, acts by interacting with long intergenic RNA p21 (lincRNA-p21), a non-coding RNA induced by p53/TP53. This interaction is necessary for the induction of apoptosis, but not cell cycle arrest. As part of a ribonucleoprotein complex composed at least of ZNF827, HNRNPL and the circular RNA circZNF827 that nucleates the complex on chromatin, may negatively regulate the transcription of genes involved in neuronal differentiation. The sequence is that of Heterogeneous nuclear ribonucleoprotein K (HNRNPK) from Macaca fascicularis (Crab-eating macaque).